A 274-amino-acid chain; its full sequence is ATP synthase subunit a (274 aa).

Helical transmembrane passes span 40 to 60 (FWVC…VILI), 110 to 130 (IFVW…LVPF), 149 to 169 (DVNI…FYSI), 224 to 244 (IFIL…SVPW), and 245 to 265 (AIFH…LTIV).

This sequence belongs to the ATPase A chain family. F-type ATPases have 2 components, CF(1) - the catalytic core - and CF(0) - the membrane proton channel. CF(1) has five subunits: alpha(3), beta(3), gamma(1), delta(1), epsilon(1). CF(0) has three main subunits: a(1), b(2) and c(9-12). The alpha and beta chains form an alternating ring which encloses part of the gamma chain. CF(1) is attached to CF(0) by a central stalk formed by the gamma and epsilon chains, while a peripheral stalk is formed by the delta and b chains.

It localises to the cell membrane. Key component of the proton channel; it plays a direct role in the translocation of protons across the membrane. The chain is ATP synthase subunit a from Buchnera aphidicola subsp. Baizongia pistaciae (strain Bp).